The primary structure comprises 287 residues: Probable ketose 3-epimerase (287 aa).

The Proton donor/acceptor role is filled by glutamate 152. Residues glutamate 152 and aspartate 185 each contribute to the Mn(2+) site. Histidine 188 lines the substrate pocket. Histidine 211 serves as a coordination point for Mn(2+). Arginine 217 is a binding site for substrate. Residue glutamate 246 is the Proton donor/acceptor of the active site. Glutamate 246 serves as a coordination point for Mn(2+).

Belongs to the hyi family. Mn(2+) is required as a cofactor.

In terms of biological role, probably catalyzes the epimerization of ketopentoses and/or ketohexoses at the C3 position. This is Probable ketose 3-epimerase from Synechocystis sp. (strain ATCC 27184 / PCC 6803 / Kazusa).